A 162-amino-acid polypeptide reads, in one-letter code: Tegument protein BLRF2 (162 aa).

A coiled-coil region spans residues 12 to 43; the sequence is VKAVDMSMEDMAARLARLESENKALKQQVLRG. The disordered stretch occupies residues 118–162; sequence SMLGAKGQPSPGEGTRPRESNDPNATRRARSRSRGREAKKVQISD. Over residues 151–162 the composition is skewed to basic and acidic residues; that stretch reads RGREAKKVQISD.

The protein belongs to the herpesviridae BLRF2 family. As to quaternary structure, homooligomer; homooligomerizes and binds double-stranded DNA (dsDNA) cooperatively. Interacts with host CGAS.

The protein resides in the virion tegument. Its subcellular location is the host cytoplasm. Functionally, plays a role in the inhibition of host innate immune system by targeting the CGAS enzymatic activity which is the principal cytosolic DNA sensor that detects invading viral DNA. Acts by inhibiting CGAS-DNA phase separation: directly binds double-stranded DNA (dsDNA) in a length dependent but sequence independent manner and is able to form DNA-induced phase separation in infected cells. DNA phase separation of ORF52 mediates disruption of liquid-like droplets in which CGAS is activated, thereby preventing CGAS activity. The protein is Tegument protein BLRF2 of Homo sapiens (Human).